A 485-amino-acid polypeptide reads, in one-letter code: WD repeat-containing protein 13 (485 aa).

Met-1 is subject to N-acetylmethionine. 3 positions are modified to phosphoserine: Ser-70, Ser-74, and Ser-79. Position 114 is an asymmetric dimethylarginine; alternate (Arg-114). Arg-114 carries the post-translational modification Omega-N-methylarginine; alternate. WD repeat units lie at residues 162 to 202 (GMYH…LCQL), 208 to 246 (TVLR…IWAS), 250 to 290 (RCIR…VMNI), 295 to 335 (KVKG…LFDM), 341 to 389 (TKAK…VVDN), 394 to 438 (QLKR…FFDV), and 444 to 482 (AAVN…VWRR).

As to expression, widely expressed.

It is found in the nucleus. The protein is WD repeat-containing protein 13 (WDR13) of Homo sapiens (Human).